Reading from the N-terminus, the 299-residue chain is Zinc finger protein 414 (299 aa).

2 stretches are compositionally biased toward polar residues: residues 1 to 20 (MEELSGPSSDTLATVESSSN) and 70 to 80 (SCQTSSTTRGV). A disordered region spans residues 1-102 (MEELSGPSSD…PPPGKQIPCS (102 aa)). 2 C2H2-type zinc fingers span residues 99-123 (IPCSSPGCSLSFPSVRDLAQHLRTH) and 135-159 (FRCSALSCTESFPSMQELVAHGKLH). The C2H2-type 3; degenerate zinc finger occupies 166 to 190 (FKCENCLLRFRTHRSLFKHLHVCID). Disordered stretches follow at residues 193-228 (QNPAPPPPPALDKEPPVPERPPESDPSSSLGLPFPL) and 254-299 (PRLR…GACR). Basic and acidic residues predominate over residues 203–215 (LDKEPPVPERPPE). Residues 217–228 (DPSSSLGLPFPL) show a composition bias toward low complexity. The segment covering 268-285 (TSSTAIWKKSQGATSSPR) has biased composition (polar residues).

Belongs to the krueppel C2H2-type zinc-finger protein family.

The protein resides in the nucleus. In terms of biological role, may be involved in transcriptional regulation. The chain is Zinc finger protein 414 (Znf414) from Rattus norvegicus (Rat).